Reading from the N-terminus, the 126-residue chain is MARLSGVDLPREKRVEIALTYIFGIGRSRSRDTLAATGVNPDTRVRDLTDDEVQKLREWIDANYRVEGDLNREIKQDIRRKMEIGCYQGLRHRRNLPVHGQRTHTNARTRKGPRRAIAGKKKAGKK.

A disordered region spans residues 94-126 (RNLPVHGQRTHTNARTRKGPRRAIAGKKKAGKK).

The protein belongs to the universal ribosomal protein uS13 family. In terms of assembly, part of the 30S ribosomal subunit. Forms a loose heterodimer with protein S19. Forms two bridges to the 50S subunit in the 70S ribosome.

Functionally, located at the top of the head of the 30S subunit, it contacts several helices of the 16S rRNA. In the 70S ribosome it contacts the 23S rRNA (bridge B1a) and protein L5 of the 50S subunit (bridge B1b), connecting the 2 subunits; these bridges are implicated in subunit movement. Contacts the tRNAs in the A and P-sites. The polypeptide is Small ribosomal subunit protein uS13 (Parafrankia sp. (strain EAN1pec)).